Here is a 131-residue protein sequence, read N- to C-terminus: Profilin-2 (131 aa).

Belongs to the profilin family. Occurs in many kinds of cells as a complex with monomeric actin in a 1:1 ratio.

It localises to the cytoplasm. Its subcellular location is the cytoskeleton. Functionally, binds to actin and affects the structure of the cytoskeleton. At high concentrations, profilin prevents the polymerization of actin, whereas it enhances it at low concentrations. By binding to PIP2, it inhibits the formation of IP3 and DG. This is Profilin-2 from Lilium longiflorum (Trumpet lily).